The following is a 524-amino-acid chain: MMSMFRLSIPISASELLLASTVFCLVLWVVKAWQPRLPKGLKSPPGPWGWPVLGNVLTLGKSPHLALSRLSQRYGDVLQIRIGSTPVLVLSGLDTIRQALVRQGDDFKGRPDLYSFSLVTDGQSLTFSPDSGPVWAARRRLAQNALKSFSIASDPASSCSCYLEEHVSKEAEVLLSRLQEQMAEVGRFDPYRYIVVSVANVICAMCFSKRYDHDDQELLSLVNLSNEFGEGVASANPLDFFPILRYLPNPALDFFKDLNKRFYSFMQKMVKEHYKTFEKGQIRDVTDSLIEHCQDKRLDENANIQLSDEKIVNVVLDLFGAGFDTVTTAISWSLLYLVTNPNVQKKIQKELDTVIGRARQPRLSDRPQLPYMEAFILETFRHASFVPFTIPHSTTRDTSLSGFYIPKGRCVFVNQWQINHDQKLWGNPSEFQPERFLTLDGTINKALSEKVILFGLGKRKCIGETIARLEVFLFLAILLQQVEFSVPEGTKVDMTPIYGLTMKHARCEHFQVRVRTEGAESPAA.

Positions 33–44 are mitochondrial targeting signal; it reads WQPRLPKGLKSP. Ser-71 is a glycosylation site (O-linked (GlcNAc) serine). Position 228 (Phe-228) interacts with substrate. Cys-461 contributes to the heme binding site.

Belongs to the cytochrome P450 family. In terms of assembly, interacts with cytosolic chaperones HSP70 and HSP90; this interaction is required for initial targeting to mitochondria. Interacts (via mitochondrial targeting signal) with TOMM40 (via N-terminus); this interaction is required for translocation across the mitochondrial outer membrane. The cofactor is heme.

The protein resides in the endoplasmic reticulum membrane. Its subcellular location is the mitochondrion inner membrane. The protein localises to the microsome membrane. It localises to the cytoplasm. The catalysed reaction is an organic molecule + reduced [NADPH--hemoprotein reductase] + O2 = an alcohol + oxidized [NADPH--hemoprotein reductase] + H2O + H(+). The enzyme catalyses estrone + reduced [NADPH--hemoprotein reductase] + O2 = 2-hydroxyestrone + oxidized [NADPH--hemoprotein reductase] + H2O + H(+). It carries out the reaction estrone + reduced [NADPH--hemoprotein reductase] + O2 = 4-hydroxyestrone + oxidized [NADPH--hemoprotein reductase] + H2O + H(+). It catalyses the reaction estrone + reduced [NADPH--hemoprotein reductase] + O2 = 6alpha-hydroxyestrone + oxidized [NADPH--hemoprotein reductase] + H2O + H(+). The catalysed reaction is estrone + reduced [NADPH--hemoprotein reductase] + O2 = 15alpha-hydroxyestrone + oxidized [NADPH--hemoprotein reductase] + H2O + H(+). The enzyme catalyses estrone + reduced [NADPH--hemoprotein reductase] + O2 = 16alpha-hydroxyestrone + oxidized [NADPH--hemoprotein reductase] + H2O + H(+). It carries out the reaction 17beta-estradiol + reduced [NADPH--hemoprotein reductase] + O2 = 2-hydroxy-17beta-estradiol + oxidized [NADPH--hemoprotein reductase] + H2O + H(+). It catalyses the reaction 17beta-estradiol + reduced [NADPH--hemoprotein reductase] + O2 = 4-hydroxy-17beta-estradiol + oxidized [NADPH--hemoprotein reductase] + H2O + H(+). The catalysed reaction is 17beta-estradiol + reduced [NADPH--hemoprotein reductase] + O2 = 6alpha-hydroxy-17beta-estradiol + oxidized [NADPH--hemoprotein reductase] + H2O + H(+). The enzyme catalyses 17beta-estradiol + reduced [NADPH--hemoprotein reductase] + O2 = 7alpha-hydroxy-17beta-estradiol + oxidized [NADPH--hemoprotein reductase] + H2O + H(+). It carries out the reaction 17beta-estradiol + reduced [NADPH--hemoprotein reductase] + O2 = 15alpha-hydroxy-17beta-estradiol + oxidized [NADPH--hemoprotein reductase] + H2O + H(+). It catalyses the reaction (5Z,8Z,11Z)-eicosatrienoate + reduced [NADPH--hemoprotein reductase] + O2 = 19-hydroxy-(5Z,8Z,11Z)-eicosatrienoate + oxidized [NADPH--hemoprotein reductase] + H2O + H(+). The catalysed reaction is (5Z,8Z,11Z,14Z)-eicosatetraenoate + reduced [NADPH--hemoprotein reductase] + O2 = 16-hydroxy-(5Z,8Z,11Z,14Z)-eicosatetraenoate + oxidized [NADPH--hemoprotein reductase] + H2O + H(+). The enzyme catalyses (5Z,8Z,11Z,14Z)-eicosatetraenoate + reduced [NADPH--hemoprotein reductase] + O2 = 17-hydroxy-(5Z,8Z,11Z,14Z)-eicosatetraenoate + oxidized [NADPH--hemoprotein reductase] + H2O + H(+). It carries out the reaction (5Z,8Z,11Z,14Z)-eicosatetraenoate + reduced [NADPH--hemoprotein reductase] + O2 = 18-hydroxy-(5Z,8Z,11Z,14Z)-eicosatetraenoate + oxidized [NADPH--hemoprotein reductase] + H2O + H(+). It catalyses the reaction (5Z,8Z,11Z,14Z)-eicosatetraenoate + reduced [NADPH--hemoprotein reductase] + O2 = 19-hydroxy-(5Z,8Z,11Z,14Z)-eicosatetraenoate + oxidized [NADPH--hemoprotein reductase] + H2O + H(+). The catalysed reaction is (5Z,8Z,11Z,14Z,17Z)-eicosapentaenoate + reduced [NADPH--hemoprotein reductase] + O2 = 19-hydroxy-(5Z,8Z,11Z,14Z,17Z)-eicosapentaenoate + oxidized [NADPH--hemoprotein reductase] + H2O + H(+). The enzyme catalyses (5Z,8Z,11Z,14Z)-eicosatetraenoate + reduced [NADPH--hemoprotein reductase] + O2 = (8R,9S)-epoxy-(5Z,11Z,14Z)-eicosatrienoate + oxidized [NADPH--hemoprotein reductase] + H2O + H(+). It carries out the reaction (5Z,8Z,11Z,14Z)-eicosatetraenoate + reduced [NADPH--hemoprotein reductase] + O2 = (11R,12S)-epoxy-(5Z,8Z,14Z)-eicosatrienoate + oxidized [NADPH--hemoprotein reductase] + H2O + H(+). It catalyses the reaction (5Z,8Z,11Z,14Z)-eicosatetraenoate + reduced [NADPH--hemoprotein reductase] + O2 = (14S,15R)-epoxy-(5Z,8Z,11Z)-eicosatrienoate + oxidized [NADPH--hemoprotein reductase] + H2O + H(+). The catalysed reaction is (5Z,8Z,11Z,14Z)-eicosatetraenoate + reduced [NADPH--hemoprotein reductase] + O2 = (14R,15S)-epoxy-(5Z,8Z,11Z)-eicosatrienoate + oxidized [NADPH--hemoprotein reductase] + H2O + H(+). The enzyme catalyses (5Z,8Z,11Z,14Z,17Z)-eicosapentaenoate + reduced [NADPH--hemoprotein reductase] + O2 = (17R,18S)-epoxy-(5Z,8Z,11Z,14Z)-eicosatetraenoate + oxidized [NADPH--hemoprotein reductase] + H2O + H(+). It carries out the reaction (4Z,7Z,10Z,13Z,16Z,19Z)-docosahexaenoate + reduced [NADPH--hemoprotein reductase] + O2 = (19S,20R)-epoxy-(4Z,7Z,10Z,13Z,16Z)-docosapentaenoate + oxidized [NADPH--hemoprotein reductase] + H2O + H(+). It catalyses the reaction (4Z,7Z,10Z,13Z,16Z,19Z)-docosahexaenoate + reduced [NADPH--hemoprotein reductase] + O2 = (19R,20S)-epoxy-(4Z,7Z,10Z,13Z,16Z)-docosapentaenoate + oxidized [NADPH--hemoprotein reductase] + H2O + H(+). The catalysed reaction is all-trans-retinol + reduced [NADPH--hemoprotein reductase] + O2 = all-trans-retinal + oxidized [NADPH--hemoprotein reductase] + 2 H2O + H(+). The enzyme catalyses all-trans-retinal + reduced [NADPH--hemoprotein reductase] + O2 = all-trans-retinoate + oxidized [NADPH--hemoprotein reductase] + H2O + 2 H(+). It carries out the reaction (13S)-hydroperoxy-(9Z,11E)-octadecadienoate = 13-oxo-(9Z,11E)-octadecadienoate + H2O. It catalyses the reaction (12S)-hydroperoxy-(5Z,8Z,10E,14Z)-eicosatetraenoate = 12-oxo-(5Z,8Z,10E,14Z)-eicosatetraenoate + H2O. The catalysed reaction is (15S)-hydroperoxy-(5Z,8Z,11Z,13E)-eicosatetraenoate = 15-oxo-(5Z,8Z,11Z,13E)-eicosatetraenoate + H2O. The enzyme catalyses (5S)-hydroperoxy-(6E,8Z,11Z,14Z)-eicosatetraenoate = 5-oxo-(6E,8Z,11Z,14Z)-eicosatetraenoate + H2O. It participates in steroid hormone biosynthesis. It functions in the pathway lipid metabolism; fatty acid metabolism. The protein operates within cofactor metabolism; retinol metabolism. A cytochrome P450 monooxygenase involved in the metabolism of various endogenous substrates, including fatty acids, steroid hormones and vitamins. Mechanistically, uses molecular oxygen inserting one oxygen atom into a substrate, and reducing the second into a water molecule, with two electrons provided by NADPH via cytochrome P450 reductase (CPR; NADPH-ferrihemoprotein reductase). Catalyzes the hydroxylation of carbon-hydrogen bonds. Exhibits high catalytic activity for the formation of hydroxyestrogens from estrone (E1) and 17beta-estradiol (E2), namely 2-hydroxy E1 and E2, as well as D-ring hydroxylated E1 and E2 at the C15alpha and C16alpha positions. Displays different regioselectivities for polyunsaturated fatty acids (PUFA) hydroxylation. Catalyzes the epoxidation of double bonds of certain PUFA. Converts arachidonic acid toward epoxyeicosatrienoic acid (EET) regioisomers, 8,9-, 11,12-, and 14,15-EET, that function as lipid mediators in the vascular system. Displays an absolute stereoselectivity in the epoxidation of eicosapentaenoic acid (EPA) producing the 17(R),18(S) enantiomer. May play an important role in all-trans retinoic acid biosynthesis in extrahepatic tissues. Catalyzes two successive oxidative transformation of all-trans retinol to all-trans retinal and then to the active form all-trans retinoic acid. May also participate in eicosanoids metabolism by converting hydroperoxide species into oxo metabolites (lipoxygenase-like reaction, NADPH-independent). The chain is Cytochrome P450 1A1 (CYP1A1) from Canis lupus familiaris (Dog).